An 862-amino-acid chain; its full sequence is Leucine--tRNA ligase (862 aa).

Residues Pro44–His54 carry the 'HIGH' region motif. Residues Lys622–Ser626 carry the 'KMSKS' region motif. Lys625 is an ATP binding site.

It belongs to the class-I aminoacyl-tRNA synthetase family.

It is found in the cytoplasm. It carries out the reaction tRNA(Leu) + L-leucine + ATP = L-leucyl-tRNA(Leu) + AMP + diphosphate. The polypeptide is Leucine--tRNA ligase (Rhodospirillum rubrum (strain ATCC 11170 / ATH 1.1.1 / DSM 467 / LMG 4362 / NCIMB 8255 / S1)).